The chain runs to 234 residues: Small ribosomal subunit protein uS2 (234 aa).

This sequence belongs to the universal ribosomal protein uS2 family.

This is Small ribosomal subunit protein uS2 from Prochlorococcus marinus (strain AS9601).